The following is a 337-amino-acid chain: Putative transcription activator protein HfaB (337 aa).

Over residues 303-313 the composition is skewed to polar residues; the sequence is AYNNLGTNNAQ. The disordered stretch occupies residues 303–337; it reads AYNNLGTNNAQTRDDPSRWNARRDPDIRDAKRGRY. The span at 314-337 shows a compositional bias: basic and acidic residues; the sequence is TRDDPSRWNARRDPDIRDAKRGRY.

Functionally, required for the attachment of the holdfast to the cell. May be involved in the positive regulation of hfaC. The protein is Putative transcription activator protein HfaB (hfaB) of Caulobacter vibrioides (strain ATCC 19089 / CIP 103742 / CB 15) (Caulobacter crescentus).